Reading from the N-terminus, the 561-residue chain is Bifunctional NAD(P)H-hydrate repair enzyme (561 aa).

Residues 1 to 241 (MLSRISERCT…WMIAAERMDA (241 aa)) form an NAD(P)H-hydrate epimerase region. The YjeF N-terminal domain maps to 29-235 (LRDAEPAAAA…SLGLEEWMIA (207 aa)). Residues 77-81 (NNGGD) form an NADPHX 1; for epimerase activity region. K(+)-binding residues include asparagine 78 and aspartate 145. The tract at residues 149–155 (GTGISGP) is NADPHX 1; for epimerase activity. (6S)-NADPHX is bound by residues tyrosine 160 and aspartate 178. A K(+)-binding site is contributed by serine 181. Residues 249–548 (LGDVYGYFST…PRIPFIVNAS (300 aa)) enclose the YjeF C-terminal domain. The tract at residues 249-561 (LGDVYGYFST…SATQQRPSGL (313 aa)) is ADP-dependent (S)-NAD(P)H-hydrate dehydratase. Glycine 351 is a (6S)-NADPHX binding site. Residues 417–423 (HPGEAAR) are NADPHX 2; for dehydratase activity. ADP contacts are provided by residues 454–458 (KGPGT) and 475–484 (NAGMASGGMG). Aspartate 485 is a binding site for (6S)-NADPHX.

This sequence in the N-terminal section; belongs to the NnrE/AIBP family. In the C-terminal section; belongs to the NnrD/CARKD family. The cofactor is K(+).

It catalyses the reaction (6S)-NADHX + ADP = AMP + phosphate + NADH + H(+). It carries out the reaction (6S)-NADPHX + ADP = AMP + phosphate + NADPH + H(+). The enzyme catalyses (6R)-NADHX = (6S)-NADHX. The catalysed reaction is (6R)-NADPHX = (6S)-NADPHX. Its function is as follows. Bifunctional enzyme that catalyzes the epimerization of the S- and R-forms of NAD(P)HX and the dehydration of the S-form of NAD(P)HX at the expense of ADP, which is converted to AMP. This allows the repair of both epimers of NAD(P)HX, a damaged form of NAD(P)H that is a result of enzymatic or heat-dependent hydration. This chain is Bifunctional NAD(P)H-hydrate repair enzyme, found in Leishmania braziliensis.